We begin with the raw amino-acid sequence, 269 residues long: Putative biopolymer transport protein ExbD (269 aa).

The Cytoplasmic portion of the chain corresponds to Met1–Glu40. A helical transmembrane segment spans residues Ile41–Gly61. Over Leu62 to Gln269 the chain is Periplasmic. Positions Asn190 to Gln269 are disordered. The span at Asn193–Pro204 shows a compositional bias: low complexity.

The protein belongs to the ExbD/TolR family.

Its subcellular location is the cell inner membrane. The protein is Putative biopolymer transport protein ExbD of Synechocystis sp. (strain ATCC 27184 / PCC 6803 / Kazusa).